The primary structure comprises 304 residues: Urease accessory protein UreD (304 aa).

The protein belongs to the UreD family. As to quaternary structure, ureD, UreF and UreG form a complex that acts as a GTP-hydrolysis-dependent molecular chaperone, activating the urease apoprotein by helping to assemble the nickel containing metallocenter of UreC. The UreE protein probably delivers the nickel.

The protein localises to the cytoplasm. Required for maturation of urease via the functional incorporation of the urease nickel metallocenter. In Haloquadratum walsbyi (strain DSM 16790 / HBSQ001), this protein is Urease accessory protein UreD.